The chain runs to 264 residues: GATA transcription factor 2 (264 aa).

The segment covering 29 to 42 has biased composition (low complexity); sequence SSSGGSTAATSSSS. Disordered regions lie at residues 29–57 and 96–192; these read SSSGGSTAATSSSSFPPPQNPSFHHHHLP and NPLG…TPQW. A compositionally biased stretch (polar residues) spans 101-110; sequence TMTSVKTETS. A Nuclear localization signal motif is present at residues 114–121; that stretch reads KPRSKRSR. Gly residues predominate over residues 155–164; that stretch reads SGGGGGGGGR. A GATA-type zinc finger spans residues 175–229; the sequence is GGGMRRCTHCASEKTPQWRTGPLGPKTLCNACGVRFKSGRLVPEYRPASSPTFVL.

The protein belongs to the type IV zinc-finger family. Class A subfamily. As to expression, mostly expressed in roots. Also expressed in flowers and leaves, and to a lower extent in stems.

The protein localises to the nucleus. Transcriptional activator that specifically binds 5'-GATA-3' or 5'-GAT-3' motifs within gene promoters. May be involved in the regulation of some light-responsive genes. This Arabidopsis thaliana (Mouse-ear cress) protein is GATA transcription factor 2 (GATA2).